A 256-amino-acid polypeptide reads, in one-letter code: Pimeloyl-[acyl-carrier protein] methyl ester esterase (256 aa).

In terms of domain architecture, AB hydrolase-1 spans 15–242; the sequence is HLVLLHGWGL…AAHAPFISHP (228 aa). Residues W22, 82–83, and 143–147 each bind substrate; these read SL and FLALQ. S82 functions as the Nucleophile in the catalytic mechanism. Residues D207 and H235 contribute to the active site. H235 provides a ligand contact to substrate.

It belongs to the AB hydrolase superfamily. Carboxylesterase BioH family. Monomer.

It localises to the cytoplasm. It catalyses the reaction 6-carboxyhexanoyl-[ACP] methyl ester + H2O = 6-carboxyhexanoyl-[ACP] + methanol + H(+). It participates in cofactor biosynthesis; biotin biosynthesis. Functionally, the physiological role of BioH is to remove the methyl group introduced by BioC when the pimeloyl moiety is complete. It allows to synthesize pimeloyl-ACP via the fatty acid synthetic pathway through the hydrolysis of the ester bonds of pimeloyl-ACP esters. The protein is Pimeloyl-[acyl-carrier protein] methyl ester esterase of Escherichia coli O6:K15:H31 (strain 536 / UPEC).